We begin with the raw amino-acid sequence, 99 residues long: Large ribosomal subunit protein bL21 (99 aa).

It belongs to the bacterial ribosomal protein bL21 family. In terms of assembly, part of the 50S ribosomal subunit. Contacts protein L20.

This protein binds to 23S rRNA in the presence of protein L20. This Anaplasma phagocytophilum (strain HZ) protein is Large ribosomal subunit protein bL21.